Reading from the N-terminus, the 581-residue chain is Leucine-rich repeat transmembrane neuronal protein 3 (581 aa).

A signal peptide spans 1-30 (MGFNVIRLLSGSAVALVIAPTVLLTMLSSA). One can recognise an LRRNT domain in the interval 31–61 (ERGCPKGCRCEGKMVYCESQKLQEIPSSISA). The Extracellular portion of the chain corresponds to 31–419 (ERGCPKGCRC…ADAEHISFHK (389 aa)). LRR repeat units follow at residues 63–83 (CLGL…QFKG), 86–107 (QLTW…AFNG), 110–131 (RLKE…TFRP), 134–155 (NLRN…QFRG), 158–179 (KLLS…IFQD), 182–203 (NLEL…VFAG), 206–226 (RLKE…ALFP), 230–251 (SLQN…MSWT), 254–275 (SLQR…SVFQ), and 279–300 (NLQR…ILDS). N-linked (GlcNAc...) asparagine glycosylation is present at Asn-126. Residues 312-363 (NIWECSRNICSLVNWLKSFKGLRENTIICASPKELQGVNVIDAVKNYSICGK) form the LRRCT domain. N-linked (GlcNAc...) asparagine glycosylation occurs at Asn-357. Positions 377 to 408 (KPTFKPKLPRPKHESKPPLPPTVGATEPGPET) are disordered. A helical membrane pass occupies residues 420-440 (IIAGSVALFLSVLVILLVIYV). Over 441–581 (SWKRYPASMK…RISDHKQQLA (141 aa)) the chain is Cytoplasmic.

It belongs to the LRRTM family. In terms of tissue distribution, expressed in neuronal tissues.

It localises to the cell membrane. The protein resides in the postsynaptic cell membrane. Its function is as follows. Exhibits a limited synaptogenic activity in vitro, restricted to excitatory presynaptic differentiation. May play a role in the development and maintenance of the vertebrate nervous system. The sequence is that of Leucine-rich repeat transmembrane neuronal protein 3 (LRRTM3) from Homo sapiens (Human).